Consider the following 420-residue polypeptide: UDP-N-acetylglucosamine 1-carboxyvinyltransferase (420 aa).

22–23 (KN) is a phosphoenolpyruvate binding site. Arginine 91 provides a ligand contact to UDP-N-acetyl-alpha-D-glucosamine. Cysteine 115 (proton donor) is an active-site residue. At cysteine 115 the chain carries 2-(S-cysteinyl)pyruvic acid O-phosphothioketal. UDP-N-acetyl-alpha-D-glucosamine contacts are provided by residues 120 to 124 (RPVDL), 160 to 163 (KVSV), aspartate 305, and isoleucine 327.

The protein belongs to the EPSP synthase family. MurA subfamily.

The protein localises to the cytoplasm. It catalyses the reaction phosphoenolpyruvate + UDP-N-acetyl-alpha-D-glucosamine = UDP-N-acetyl-3-O-(1-carboxyvinyl)-alpha-D-glucosamine + phosphate. It participates in cell wall biogenesis; peptidoglycan biosynthesis. Functionally, cell wall formation. Adds enolpyruvyl to UDP-N-acetylglucosamine. The protein is UDP-N-acetylglucosamine 1-carboxyvinyltransferase of Erwinia tasmaniensis (strain DSM 17950 / CFBP 7177 / CIP 109463 / NCPPB 4357 / Et1/99).